The following is a 208-amino-acid chain: Hemocyanin, units E and F (208 aa).

Residue His-1 coordinates Cu cation. The interval 1 to 74 (HGLPAQCPNA…HDLESVRGNL (74 aa)) is unit E. Cys-7 and Cys-18 form a disulfide bridge. A cross-link (2'-(S-cysteinyl)-histidine (Cys-His)) is located at residues 19–21 (CLH). A glycan (N-linked (GlcNAc...) asparagine) is linked at Asn-43. The segment at 75 to 208 (VRKNVDRLSL…GHLSLLSPET (134 aa)) is unit F. His-113 contacts Cu cation. Residues Cys-119 and Cys-130 are joined by a disulfide bond. The 2'-(S-cysteinyl)-histidine (Cys-His) cross-link spans 131 to 133 (CLH). Cu cation contacts are provided by His-133 and His-142.

It belongs to the tyrosinase family. Hemocyanin subfamily. In terms of assembly, decamers of large identical subunits (390 kDa), each containing 8 globular oxygen-binding functional units. It depends on Cu(2+) as a cofactor.

Hemocyanins are copper-containing oxygen carriers occurring freely dissolved in the hemolymph of many mollusks and arthropods. The chain is Hemocyanin, units E and F from Sepia officinalis (Common cuttlefish).